A 74-amino-acid polypeptide reads, in one-letter code: uncharacterized protein (74 aa).

This is an uncharacterized protein from Enterobacteria phage T4 (Bacteriophage T4).